A 708-amino-acid chain; its full sequence is GID complex associated protein 12 (708 aa).

Residues 381 to 396 are compositionally biased toward low complexity; that stretch reads SSRRNSSFSTASSEPR. A disordered region spans residues 381 to 403; that stretch reads SSRRNSSFSTASSEPRPLSRRRR.

As to quaternary structure, interacts with core components of the GID/CTLH ubiquitin ligase complex. GID12 binds both the substrate receptor GID4 and the tip of GID5 in the scaffolding module, sealing GID4 onto the scaffold.

Regulator of the GID E3 ligase complex. Modulates both assembly of the substrate receptor GID4 into the GID E3 ligase complex and its activity toward its substrates. GID12-binding remodels the N-degron binding pocket in the GID(SR4) complex, and could limit substrate accessibility of a bulky substrate to a ubiquitynation active site, thereby stabilizing gluconeogenic enzyme substrates. Involved in actin patch formation. The sequence is that of GID complex associated protein 12 from Saccharomyces cerevisiae (strain ATCC 204508 / S288c) (Baker's yeast).